A 1030-amino-acid polypeptide reads, in one-letter code: MMS19 nucleotide excision repair protein homolog (1030 aa).

Ala2 is subject to N-acetylalanine. 4 HEAT repeats span residues 866-904 (QRFF…RLPK), 908-946 (LPEL…EAPQ), 949-987 (SLHV…LPTP), and 990-1028 (LPYK…LGSP). A Phosphoserine modification is found at Ser1027.

Belongs to the MET18/MMS19 family. Component of the CIA complex. In the CIA complex, interacts directly with CIAO2B and CIAO3. Component of the MMXD complex, composed of CIAO1, ERCC2, CIAO2B, MMS19 and SLC25A5. Interacts with CIAO2B; the interaction is direct. Interacts with ERCC2/XPD; the interaction is direct. Interacts with ERCC3/XPB and NCOA3/RAC3. Interacts with RTEL1; the interaction mediates the association of RTEL1 with the CIA complex. Interacts with BRIP1. Interacts with KIF4A; the interaction facilitates the transfer of Fe-S clusters to KIF4A to ensure proper localization of KIF4A to the mitotic machinery components. Interacts with CCDC117; the interaction is indirect. In terms of processing, ubiquitinated; undergoes 'Lys-48'-linked polyubiquitination.

The protein resides in the nucleus. The protein localises to the cytoplasm. It localises to the cytoskeleton. It is found in the spindle. Its function is as follows. Key component of the cytosolic iron-sulfur protein assembly (CIA) complex, a multiprotein complex that mediates the incorporation of iron-sulfur cluster into apoproteins specifically involved in DNA metabolism and genomic integrity. In the CIA complex, MMS19 acts as an adapter between early-acting CIA components and a subset of cellular target Fe/S proteins such as ERCC2/XPD, FANCJ and RTEL1, thereby playing a key role in nucleotide excision repair (NER), homologous recombination-mediated double-strand break DNA repair, DNA replication and RNA polymerase II (POL II) transcription. As a CIA complex component and in collaboration with CIAO1 and CIAO2, binds to and facilitates the assembly of most cytosolic-nuclear Fe/S proteins. As part of the mitotic spindle-associated MMXD complex, plays a role in chromosome segregation, probably by facilitating iron-sulfur cluster assembly into ERCC2/XPD. Together with CIAO2, facilitates the transfer of Fe-S clusters to the motor protein KIF4A, which ensures proper localization of KIF4A to mitotic machinery components to promote the progression of mitosis. Indirectly acts as a transcriptional coactivator of estrogen receptor (ER), via its role in iron-sulfur insertion into some component of the TFIIH-machinery. In Bos taurus (Bovine), this protein is MMS19 nucleotide excision repair protein homolog.